The sequence spans 1442 residues: ABC transporter G family member 35 (1442 aa).

Residues L169–E442 enclose the ABC transporter 1 domain. Residue G202–T209 participates in ATP binding. One can recognise an ABC transmembrane type-2 1 domain in the interval E520 to L733. 7 helical membrane passes run F538–Y558, I573–M593, L619–V639, F657–T677, I683–L703, W714–F734, and I769–L789. The ABC transporter 2 domain maps to M840–P1092. G885–T892 provides a ligand contact to ATP. One can recognise an ABC transmembrane type-2 2 domain in the interval G1165–Y1379. The next 7 helical transmembrane spans lie at L1186–I1206, M1218–V1238, L1272–F1292, F1299–M1319, V1329–I1349, W1357–S1377, and P1414–I1434.

Belongs to the ABC transporter superfamily. ABCG family. PDR (TC 3.A.1.205) subfamily. In terms of tissue distribution, ubiquitous with higher levels in roots.

It localises to the membrane. In terms of biological role, may be a general defense protein. The chain is ABC transporter G family member 35 (ABCG35) from Arabidopsis thaliana (Mouse-ear cress).